The chain runs to 148 residues: Ribonuclease H (148 aa).

Residues 1-142 (MSDSVEMFTD…ADQLANRGVD (142 aa)) enclose the RNase H type-1 domain. Mg(2+) is bound by residues D10, E48, D70, and D134.

It belongs to the RNase H family. As to quaternary structure, monomer. It depends on Mg(2+) as a cofactor.

The protein resides in the cytoplasm. It carries out the reaction Endonucleolytic cleavage to 5'-phosphomonoester.. Its function is as follows. Endonuclease that specifically degrades the RNA of RNA-DNA hybrids. The protein is Ribonuclease H of Pseudomonas putida (strain ATCC 700007 / DSM 6899 / JCM 31910 / BCRC 17059 / LMG 24140 / F1).